The chain runs to 266 residues: MRLIPLTTAADVGKWAARHIVEKINAFKPSAERPFILGLPTGTSPLEAYKSLVTMHKAGLVSFKHVVTFNMDEYVGLPTDHPESYHTFMHQNFFNHIDILRENINLLNGNAADTTAECRRYEEKIKSYGKIHLFMGGVGNDGHIAFNEPASSLASRTRIKTLTEETRIANSRFFGGDVSLVPKFALTVGVGTLLDAEEVMILVTGRNKAQALQAAVEGNVNHMWTISCLQLHAKAIMVCDEPSTMELKVKTVKYFRELETESMKNL.

The Proton acceptor; for enolization step role is filled by Asp-72. The For ring-opening step role is filled by Asp-141. His-143 acts as the Proton acceptor; for ring-opening step in catalysis. Glu-148 functions as the For ring-opening step in the catalytic mechanism.

The protein belongs to the glucosamine/galactosamine-6-phosphate isomerase family. NagB subfamily. Homohexamer.

It catalyses the reaction alpha-D-glucosamine 6-phosphate + H2O = beta-D-fructose 6-phosphate + NH4(+). The protein operates within amino-sugar metabolism; N-acetylneuraminate degradation; D-fructose 6-phosphate from N-acetylneuraminate: step 5/5. Allosterically activated by N-acetylglucosamine 6-phosphate (GlcNAc6P). Catalyzes the reversible isomerization-deamination of glucosamine 6-phosphate (GlcN6P) to form fructose 6-phosphate (Fru6P) and ammonium ion. This is Glucosamine-6-phosphate deaminase from Pectobacterium atrosepticum (strain SCRI 1043 / ATCC BAA-672) (Erwinia carotovora subsp. atroseptica).